Here is a 65-residue protein sequence, read N- to C-terminus: Conotoxin Cal16.1 (65 aa).

An N-terminal signal peptide occupies residues 1–19 (MRCLSIFVLLVLLVSFAVA). Positions 20–48 (ELDVEGEIVKQLLTRGTLKDADFWKRLEM) are excised as a propeptide. The residue at position 49 (Q49) is a Pyrrolidone carboxylic acid. 2 disulfides stabilise this stretch: C51–C60 and C53–C61. The residue at position 63 (E63) is a Glutamic acid 1-amide.

In terms of tissue distribution, expressed by the venom duct.

It is found in the secreted. Functionally, probable neurotoxin with unknown target. Possibly targets ion channels. The chain is Conotoxin Cal16.1 from Californiconus californicus (California cone).